A 499-amino-acid polypeptide reads, in one-letter code: Glutamyl-tRNA(Gln) amidotransferase subunit A (499 aa).

Residues Lys79 and Ser159 each act as charge relay system in the active site. The active-site Acyl-ester intermediate is Ser183.

This sequence belongs to the amidase family. GatA subfamily. As to quaternary structure, heterotrimer of A, B and C subunits.

The catalysed reaction is L-glutamyl-tRNA(Gln) + L-glutamine + ATP + H2O = L-glutaminyl-tRNA(Gln) + L-glutamate + ADP + phosphate + H(+). Functionally, allows the formation of correctly charged Gln-tRNA(Gln) through the transamidation of misacylated Glu-tRNA(Gln) in organisms which lack glutaminyl-tRNA synthetase. The reaction takes place in the presence of glutamine and ATP through an activated gamma-phospho-Glu-tRNA(Gln). In Granulibacter bethesdensis (strain ATCC BAA-1260 / CGDNIH1), this protein is Glutamyl-tRNA(Gln) amidotransferase subunit A.